The following is a 155-amino-acid chain: Endoribonuclease YbeY (155 aa).

Zn(2+) is bound by residues His114, His118, and His124.

This sequence belongs to the endoribonuclease YbeY family. Zn(2+) serves as cofactor.

It is found in the cytoplasm. Functionally, single strand-specific metallo-endoribonuclease involved in late-stage 70S ribosome quality control and in maturation of the 3' terminus of the 16S rRNA. The sequence is that of Endoribonuclease YbeY from Photorhabdus laumondii subsp. laumondii (strain DSM 15139 / CIP 105565 / TT01) (Photorhabdus luminescens subsp. laumondii).